The following is a 127-amino-acid chain: Cytochrome c2 (127 aa).

The signal sequence occupies residues 1-20; sequence MRKLVFGLFVLAASVAPAAA. Glutamine 21 carries the pyrrolidone carboxylic acid modification. 4 residues coordinate heme c: cysteine 33, cysteine 36, histidine 37, and methionine 99.

The protein belongs to the cytochrome c family. Post-translationally, binds 1 heme c group covalently per subunit.

Its function is as follows. Cytochrome c2 is found mainly in purple, non-sulfur, photosynthetic bacteria where it functions as the electron donor to the oxidized bacteriochlorophyll in the photophosphorylation pathway. However, it may also have a role in the respiratory chain and is found in some non-photosynthetic bacteria. This chain is Cytochrome c2 (cycA), found in Blastochloris viridis (Rhodopseudomonas viridis).